We begin with the raw amino-acid sequence, 355 residues long: Peptide chain release factor 1 (355 aa).

Position 231 is an N5-methylglutamine (Q231).

It belongs to the prokaryotic/mitochondrial release factor family. Methylated by PrmC. Methylation increases the termination efficiency of RF1.

It localises to the cytoplasm. In terms of biological role, peptide chain release factor 1 directs the termination of translation in response to the peptide chain termination codons UAG and UAA. This is Peptide chain release factor 1 from Erythrobacter litoralis (strain HTCC2594).